The primary structure comprises 209 residues: dTTP/UTP pyrophosphatase (209 aa).

D88 (proton acceptor) is an active-site residue.

It belongs to the Maf family. YhdE subfamily. The cofactor is a divalent metal cation.

It localises to the cytoplasm. The catalysed reaction is dTTP + H2O = dTMP + diphosphate + H(+). It catalyses the reaction UTP + H2O = UMP + diphosphate + H(+). Nucleoside triphosphate pyrophosphatase that hydrolyzes dTTP and UTP. May have a dual role in cell division arrest and in preventing the incorporation of modified nucleotides into cellular nucleic acids. This Burkholderia mallei (strain ATCC 23344) protein is dTTP/UTP pyrophosphatase.